The following is a 182-amino-acid chain: UPF0397 protein SPG_0438 (182 aa).

5 helical membrane-spanning segments follow: residues 10–30, 46–66, 73–93, 109–129, and 148–168; these read VVAVGIGAALFVVIGMINIPT, LLSIIFGPIIGLLVGLIGHAI, YGLWWTWIIASGLFGLVVGLF, ILIFNLIQLLANALVWGVLAP, and IVAGIANGVSVAIAGTLLLLA.

This sequence belongs to the UPF0397 family.

The protein resides in the cell membrane. This Streptococcus pneumoniae serotype 19F (strain G54) protein is UPF0397 protein SPG_0438.